The following is a 294-amino-acid chain: 2-hydroxy-3-oxopropionate reductase (294 aa).

Residues 4–18 (GFIG…MSKN) and Ser95 each bind NAD(+). Lys170 is a catalytic residue. Lys238 lines the NAD(+) pocket.

The protein belongs to the HIBADH-related family. 2-hydroxy-3-oxopropionate reductase subfamily.

The enzyme catalyses (R)-glycerate + NADP(+) = 2-hydroxy-3-oxopropanoate + NADPH + H(+). It catalyses the reaction (R)-glycerate + NAD(+) = 2-hydroxy-3-oxopropanoate + NADH + H(+). It functions in the pathway carbohydrate acid metabolism; galactarate degradation; D-glycerate from galactarate: step 3/3. Catalyzes the reduction of tatronate semialdehyde to D-glycerate. In Escherichia coli O6:H1 (strain CFT073 / ATCC 700928 / UPEC), this protein is 2-hydroxy-3-oxopropionate reductase.